The chain runs to 698 residues: Polyribonucleotide nucleotidyltransferase (698 aa).

Residues Asp-485 and Asp-491 each contribute to the Mg(2+) site. The 60-residue stretch at 552-611 folds into the KH domain; that stretch reads PRITTIKINPEKIRDVIGKGGAVIRALTEETGTTIELDDDGTVKIASSNGEATKEAIRRI. Positions 621 to 689 constitute an S1 motif domain; that stretch reads GRVYNGKVIR…RQGRVRLSIK (69 aa).

It belongs to the polyribonucleotide nucleotidyltransferase family. In terms of assembly, component of the RNA degradosome, which is a multiprotein complex involved in RNA processing and mRNA degradation. Mg(2+) serves as cofactor.

It localises to the cytoplasm. It carries out the reaction RNA(n+1) + phosphate = RNA(n) + a ribonucleoside 5'-diphosphate. In terms of biological role, involved in mRNA degradation. Catalyzes the phosphorolysis of single-stranded polyribonucleotides processively in the 3'- to 5'-direction. The protein is Polyribonucleotide nucleotidyltransferase of Shewanella denitrificans (strain OS217 / ATCC BAA-1090 / DSM 15013).